Here is a 37-residue protein sequence, read N- to C-terminus: Large ribosomal subunit protein bL36 (37 aa).

It belongs to the bacterial ribosomal protein bL36 family.

The sequence is that of Large ribosomal subunit protein bL36 from Desulforapulum autotrophicum (strain ATCC 43914 / DSM 3382 / VKM B-1955 / HRM2) (Desulfobacterium autotrophicum).